Consider the following 124-residue polypeptide: Iron-sulfur cluster insertion protein ErpA (124 aa).

Residues Cys52, Cys116, and Cys118 each contribute to the iron-sulfur cluster site.

It belongs to the HesB/IscA family. Homodimer. Iron-sulfur cluster serves as cofactor.

In terms of biological role, required for insertion of 4Fe-4S clusters for at least IspG. This chain is Iron-sulfur cluster insertion protein ErpA, found in Acidithiobacillus ferrooxidans (strain ATCC 23270 / DSM 14882 / CIP 104768 / NCIMB 8455) (Ferrobacillus ferrooxidans (strain ATCC 23270)).